The chain runs to 276 residues: MDAEIFSLDSLSIYKDINIASAKPSLKERKNIKHYALDYLNIDEKNNAQLFKTLLEDAMRVSSKEILLIVGGSSFYLKSILEGLSDTPKISGEEVVKIEREIATLSNPYIFLKSIDPNMAFKIHSNDTYRIHKALEIFYATHTPPSEYFKANPKKPFAHAISLFALSVEKNALHNNIKQRTKNMLHSGLIEEIKALYTQYPKDSQPFKAIGVKESILFLEKRLTLKELEETITSNTIKLAKRQNTFNKTQFNNLYTGSVKEVRHAILKHSKSGIKG.

Positions Asp9–Ser12 are interaction with substrate tRNA.

Belongs to the IPP transferase family. As to quaternary structure, monomer. Mg(2+) serves as cofactor.

It catalyses the reaction adenosine(37) in tRNA + dimethylallyl diphosphate = N(6)-dimethylallyladenosine(37) in tRNA + diphosphate. Its function is as follows. Catalyzes the transfer of a dimethylallyl group onto the adenine at position 37 in tRNAs that read codons beginning with uridine, leading to the formation of N6-(dimethylallyl)adenosine (i(6)A). The protein is tRNA dimethylallyltransferase (miaA) of Helicobacter pylori (strain G27).